The sequence spans 96 residues: Co-chaperonin GroES (96 aa).

It belongs to the GroES chaperonin family. In terms of assembly, heptamer of 7 subunits arranged in a ring. Interacts with the chaperonin GroEL.

The protein localises to the cytoplasm. In terms of biological role, together with the chaperonin GroEL, plays an essential role in assisting protein folding. The GroEL-GroES system forms a nano-cage that allows encapsulation of the non-native substrate proteins and provides a physical environment optimized to promote and accelerate protein folding. GroES binds to the apical surface of the GroEL ring, thereby capping the opening of the GroEL channel. The polypeptide is Co-chaperonin GroES (Tremblaya princeps).